We begin with the raw amino-acid sequence, 78 residues long: Exodeoxyribonuclease 7 small subunit (78 aa).

This sequence belongs to the XseB family. In terms of assembly, heterooligomer composed of large and small subunits.

It is found in the cytoplasm. The enzyme catalyses Exonucleolytic cleavage in either 5'- to 3'- or 3'- to 5'-direction to yield nucleoside 5'-phosphates.. Its function is as follows. Bidirectionally degrades single-stranded DNA into large acid-insoluble oligonucleotides, which are then degraded further into small acid-soluble oligonucleotides. The polypeptide is Exodeoxyribonuclease 7 small subunit (Cutibacterium acnes (strain DSM 16379 / KPA171202) (Propionibacterium acnes)).